The sequence spans 248 residues: MKSILNDFLLMIQFFTRIPINKNLQCEKVNFRRGAFFLPVVASIIGGMEFLIYLGLKNFLPPNVIIVLLLLFTAMITGGLHMDGLADTCDGFFSLRDKERIIEIMKDSRMGAFGTIAMIINLLLKYQLLYSLVLKDCSIAIILAPVIGRISILFLCLSKRTAKKNGSGNIFIGNMSKPIIFLITIIALAMNTYFLELKITIISFTAVLIITYLFYLLCLNKINGLTGDTLGACNELGEITFLLILLMM.

Transmembrane regions (helical) follow at residues 36–56 (FFLP…YLGL), 59–79 (FLPP…ITGG), 113–133 (FGTI…YSLV), 137–157 (CSIA…FLCL), 170–190 (IFIG…ALAM), and 199–219 (ITII…LLCL).

The protein belongs to the CobS family. The cofactor is Mg(2+).

The protein localises to the cell membrane. The catalysed reaction is alpha-ribazole + adenosylcob(III)inamide-GDP = adenosylcob(III)alamin + GMP + H(+). It carries out the reaction alpha-ribazole 5'-phosphate + adenosylcob(III)inamide-GDP = adenosylcob(III)alamin 5'-phosphate + GMP + H(+). The protein operates within cofactor biosynthesis; adenosylcobalamin biosynthesis; adenosylcobalamin from cob(II)yrinate a,c-diamide: step 7/7. Functionally, joins adenosylcobinamide-GDP and alpha-ribazole to generate adenosylcobalamin (Ado-cobalamin). Also synthesizes adenosylcobalamin 5'-phosphate from adenosylcobinamide-GDP and alpha-ribazole 5'-phosphate. The protein is Adenosylcobinamide-GDP ribazoletransferase of Clostridium botulinum (strain 657 / Type Ba4).